We begin with the raw amino-acid sequence, 216 residues long: Probable GTP-binding protein EngB (216 aa).

The EngB-type G domain occupies 26–200 (EGIEIAFAGR…RAKLDTWFAP (175 aa)). GTP-binding positions include 34-41 (GRSNAGKS), 61-65 (GRTQL), 79-82 (DLPG), 146-149 (TKAD), and 179-181 (YSS). The Mg(2+) site is built by S41 and T63.

This sequence belongs to the TRAFAC class TrmE-Era-EngA-EngB-Septin-like GTPase superfamily. EngB GTPase family. Requires Mg(2+) as cofactor.

Functionally, necessary for normal cell division and for the maintenance of normal septation. This is Probable GTP-binding protein EngB from Vibrio vulnificus (strain CMCP6).